The sequence spans 552 residues: 2,3-bisphosphoglycerate-independent phosphoglycerate mutase (552 aa).

The span at 1 to 25 (MTNTQQQSESIDDNQAQLSKQQNSD) shows a compositional bias: polar residues. Residues 1-30 (MTNTQQQSESIDDNQAQLSKQQNSDNNKKV) form a disordered region. Mn(2+)-binding residues include Asp-38 and Ser-88. Ser-88 (phosphoserine intermediate) is an active-site residue. Substrate-binding positions include His-149, 179–180 (RD), Arg-217, Arg-223, 293–296 (RADR), and Lys-373. The Mn(2+) site is built by Asp-440, His-444, Asp-481, His-482, and His-500.

This sequence belongs to the BPG-independent phosphoglycerate mutase family. As to quaternary structure, monomer. Mn(2+) is required as a cofactor.

The catalysed reaction is (2R)-2-phosphoglycerate = (2R)-3-phosphoglycerate. It functions in the pathway carbohydrate degradation; glycolysis; pyruvate from D-glyceraldehyde 3-phosphate: step 3/5. Its function is as follows. Catalyzes the interconversion of 2-phosphoglycerate and 3-phosphoglycerate. In Psychrobacter arcticus (strain DSM 17307 / VKM B-2377 / 273-4), this protein is 2,3-bisphosphoglycerate-independent phosphoglycerate mutase.